The sequence spans 161 residues: Phosphopantetheine adenylyltransferase (161 aa).

T10 is a binding site for substrate. Residues 10 to 11 (TF) and H18 each bind ATP. Positions 42, 75, and 89 each coordinate substrate. Residues 90-92 (GLR), E100, and 125-131 (YSFLSSS) contribute to the ATP site.

The protein belongs to the bacterial CoaD family. Homohexamer. The cofactor is Mg(2+).

The protein resides in the cytoplasm. It catalyses the reaction (R)-4'-phosphopantetheine + ATP + H(+) = 3'-dephospho-CoA + diphosphate. It participates in cofactor biosynthesis; coenzyme A biosynthesis; CoA from (R)-pantothenate: step 4/5. Its function is as follows. Reversibly transfers an adenylyl group from ATP to 4'-phosphopantetheine, yielding dephospho-CoA (dPCoA) and pyrophosphate. The protein is Phosphopantetheine adenylyltransferase of Thermodesulfovibrio yellowstonii (strain ATCC 51303 / DSM 11347 / YP87).